A 334-amino-acid polypeptide reads, in one-letter code: Aromatic O-demethylase, reductase subunit (334 aa).

Residues 1-91 form the 2Fe-2S ferredoxin-type domain; sequence MTFAVSVGGR…DTEVRSTADA (91 aa). The [2Fe-2S] cluster site is built by C35, C40, C43, and C75. An FAD-binding FR-type domain is found at 98-198; the sequence is LRDLTATVLE…TGPLGDFHLP (101 aa). FAD contacts are provided by residues 145–148, 162–164, 170–172, T215, F330, and S334; these read RQYS, HVR, and VAT.

Monomer. Forms a heterodimer with GcoA. FAD serves as cofactor. Requires [2Fe-2S] cluster as cofactor.

It catalyses the reaction 2 oxidized [cytochrome P450] + NADH = 2 reduced [cytochrome P450] + NAD(+) + H(+). The protein operates within aromatic compound metabolism. Its function is as follows. Part of a two-component P450 system that efficiently O-demethylates diverse aromatic substrates such as guaiacol and a wide variety of lignin-derived monomers. Is likely involved in lignin degradation, allowing Amycolatopsis sp. ATCC 39116 to catabolize plant biomass. GcoB transfers electrons from NADH to the cytochrome P450 subunit GcoA. Highly prefers NADH over NADPH as the electron donor. This Amycolatopsis sp. (strain ATCC 39116 / 75iv2) protein is Aromatic O-demethylase, reductase subunit.